We begin with the raw amino-acid sequence, 427 residues long: MSVSFENTATNRGVVTFTIGQDKIQPALDQAFNKIKKNLNVPGFRKGHIPRAVFNQKFGEEALYDDALNAILPAAYEAAIAELGLDVVAQPKIDVKSIGKGQDWTLTAEVVTKPEVKLGAYKDLEVSVEVSKEVTDEEVDAKLENERKNLAELIVKDGAAEYGDTVVIDFVGSVDGVEFDGGKGENHSLELGSGQFIPGFEDQLVGAKSGDEVEVKVTFPEDYQATDLAGKAAVFVTKVNEVKAKEVPALDDELAKDLDDEVDTLDELKAKYRKELEAAKEIAFDDAVEGAALDLAVENAEIVELPAEMVENEVHRAMNEFMGNLQRQGISPEMYFQITGTTQEDLRKQYEADSDKRVKTNLVIEAVAAAEGFDATDEEIQKEINDLAAEYNMEVSQVSELLSPEMLKHDIAMKKAVEVITSSAKVK.

One can recognise a PPIase FKBP-type domain in the interval 163–248 (GDTVVIDFVG…VNEVKAKEVP (86 aa)).

Belongs to the FKBP-type PPIase family. Tig subfamily.

It localises to the cytoplasm. The enzyme catalyses [protein]-peptidylproline (omega=180) = [protein]-peptidylproline (omega=0). Its function is as follows. Involved in protein export. Acts as a chaperone by maintaining the newly synthesized protein in an open conformation. Functions as a peptidyl-prolyl cis-trans isomerase. The sequence is that of Trigger factor from Streptococcus thermophilus (strain CNRZ 1066).